Reading from the N-terminus, the 282-residue chain is MSTYLIGDIHGCYDELKIILAQVRFDPAVDTLWLTGDLVARGTGSLEVLRLVRSLGDSVQLVLGNHDLHLLAVYAGISRNKPKDRITPLLEAPDADELINWLRRQPVLQVDEEKKLVMAHAGITPQWDLATARQCAREVEAVLKSDSYPLFLDAMYGDMPNNWSPELSGLARLRFSTNVFTRMRYCFPNGQLEMNCKDTPEKASTPLRPWFALPGPVSERYSIVFGHWASLMGQGTPAHIYGLDTGCCWGGELTLLRWEDKAFTRVPSNRQNETSVENPISA.

The protein belongs to the Ap4A hydrolase family.

It carries out the reaction P(1),P(4)-bis(5'-adenosyl) tetraphosphate + H2O = 2 ADP + 2 H(+). Functionally, hydrolyzes diadenosine 5',5'''-P1,P4-tetraphosphate to yield ADP. The polypeptide is Bis(5'-nucleosyl)-tetraphosphatase, symmetrical (Sodalis glossinidius (strain morsitans)).